The sequence spans 168 residues: uncharacterized protein (168 aa).

Residues 24–44 (FIGIVLFLAVLIIGILILILF) traverse the membrane as a helical segment. 2 disordered regions span residues 69 to 92 (SPSSSFLINNNNNNNNYHQNNNSN) and 142 to 168 (NNNNNNNNNPPTNISNKLNKNGETKNI). A compositionally biased stretch (low complexity) spans 142–157 (NNNNNNNNNPPTNISN).

It is found in the membrane. This is an uncharacterized protein from Dictyostelium discoideum (Social amoeba).